The chain runs to 489 residues: 2-(3-amino-3-carboxypropyl)histidine synthase subunit 2 (489 aa).

Position 1 is an N-acetylmethionine (Met1). Residue Ser7 is modified to Phosphoserine. [4Fe-4S] cluster-binding residues include Cys89, Cys110, and Cys341. Thr435 carries the post-translational modification Phosphothreonine. Phosphoserine is present on residues Ser446 and Ser456. The residue at position 467 (Thr467) is a Phosphothreonine. Ser488 is modified (phosphoserine).

The protein belongs to the DPH1/DPH2 family. DPH2 subfamily. As to quaternary structure, component of the 2-(3-amino-3-carboxypropyl)histidine synthase complex composed of DPH1, DPH2, DPH3 and a NADH-dependent reductase. Interacts with DPH1. It depends on [4Fe-4S] cluster as a cofactor.

Its pathway is protein modification; peptidyl-diphthamide biosynthesis. In terms of biological role, required for the first step of diphthamide biosynthesis, a post-translational modification of histidine which occurs in elongation factor 2. DPH1 and DPH2 transfer a 3-amino-3-carboxypropyl (ACP) group from S-adenosyl-L-methionine (SAM) to a histidine residue, the reaction is assisted by a reduction system comprising DPH3 and a NADH-dependent reductase. Facilitates the reduction of the catalytic iron-sulfur cluster found in the DPH1 subunit. This chain is 2-(3-amino-3-carboxypropyl)histidine synthase subunit 2 (DPH2), found in Pongo abelii (Sumatran orangutan).